The chain runs to 353 residues: Protein arginine N-methyltransferase 1 (353 aa).

One can recognise an SAM-dependent MTase PRMT-type domain in the interval 32-353 (KDYYFDSYAH…LSCSTDYRMR (322 aa)). 4 residues coordinate S-adenosyl-L-methionine: His45, Arg54, Gly78, and Glu100. Residue Lys116 is modified to N6-succinyllysine. Residue Lys127 forms a Glycyl lysine isopeptide (Lys-Gly) (interchain with G-Cter in ubiquitin) linkage. Glu129 is a binding site for S-adenosyl-L-methionine. Residues Glu144 and Glu153 contribute to the active site. Residues Lys210 and Lys215 each carry the N6-acetyllysine modification. Phosphoserine occurs at positions 286 and 289.

This sequence belongs to the class I-like SAM-binding methyltransferase superfamily. Protein arginine N-methyltransferase family. In terms of assembly, homodimer and heterodimer with PRMT8. Homooctamer; individual homodimers associates to form a homooctamer. Interacts with NFATC2IP. Interacts with ILF3 and SUPT5H. Individual homodimers can associate to form a homohexamer. Interacts with FOXO1; the interaction methylates FOXO1, retaining it in the nucleus and increasing its transcriptional activity. Methylation of FOXO1 is increased with oxidative stress. Interacts with CHTOP; the interaction methylates CHTOP, enabling its interaction with the 5FMC complex. Interacts with BTG1, BTG2 and IFNAR1. Interacts with and probably methylates ATXN2L. Component of the methylosome, a 20S complex containing at least CLNS1A/pICln, PRMT5/SKB1, WDR77/MEP50, PRMT1 and ERH. Interacts with DHX9 (via RGG region). Interacts (via N-terminus) with HABP4. Interacts with MAP3K5/ASK1; the interaction results in MAP3K5 methylation by PRMT1 which inhibits MAP3K5 activation. Interacts with TRIM48; the interaction results in ubiquitination of PRMT1 by TRIM48, leading to PRMT1 proteasomal degradation and activation of MAP3K5. Interacts with GATOR1 complex; this interaction is S-adenosyl-L-methionine (SAM) dependent and is perturbated by SAMTOR in a SAM-sensitive manner. Interacts with GFI1; promoting recognition and binding of MRE11 and TP53BP1 substrates by PRMT1. In terms of processing, polyubiquitinated at Lys-127 by the SCF(FBXL17) complex, leading to its subsequent degradation. Ubiquitination is regulated by acetylation at Lys-210 and Lys-215. Polyubiquitinated by E3 ubiquitin-protein ligase TRIM48, leading to suppression of MAP3K5/ASK1 methylation and subsequent MAP3K5 activation. Post-translationally, acetylation at Lys-210 and Lys-215 regulates ubiquitination by the SCF(FBXL17) complex. Acetylated at Lys-215 by p300/EP300. Deacetylated at Lys-210 and Lys-215 by SIRT1. Ubiquitous.

Its subcellular location is the nucleus. It is found in the nucleoplasm. It localises to the cytoplasm. The protein resides in the cytosol. The protein localises to the lysosome membrane. It carries out the reaction L-arginyl-[protein] + 2 S-adenosyl-L-methionine = N(omega),N(omega)-dimethyl-L-arginyl-[protein] + 2 S-adenosyl-L-homocysteine + 2 H(+). The enzyme catalyses L-arginyl-[protein] + S-adenosyl-L-methionine = N(omega)-methyl-L-arginyl-[protein] + S-adenosyl-L-homocysteine + H(+). The catalysed reaction is N(omega)-methyl-L-arginyl-[protein] + S-adenosyl-L-methionine = N(omega),N(omega)-dimethyl-L-arginyl-[protein] + S-adenosyl-L-homocysteine + H(+). Its function is as follows. Arginine methyltransferase that methylates (mono and asymmetric dimethylation) the guanidino nitrogens of arginyl residues present in proteins such as ESR1, histone H2, H3 and H4, FMR1, ILF3, HNRNPA1, HNRNPD, NFATC2IP, SUPT5H, TAF15, EWS, HABP4, SERBP1, RBM15, FOXO1, CHTOP, MAP3K5/ASK1 and MICU1. Constitutes the main enzyme that mediates monomethylation and asymmetric dimethylation of histone H4 'Arg-3' (H4R3me1 and H4R3me2a, respectively), a specific tag for epigenetic transcriptional activation. May be involved in the regulation of TAF15 transcriptional activity, act as an activator of estrogen receptor (ER)-mediated transactivation, play a key role in neurite outgrowth and act as a negative regulator of megakaryocytic differentiation, by modulating p38 MAPK pathway. Methylates RBM15, promoting ubiquitination and degradation of RBM15. Methylates MRE11 and TP53BP1, promoting the DNA damage response. Methylates FOXO1 and retains it in the nucleus increasing its transcriptional activity. Methylates CHTOP and this methylation is critical for its 5-hydroxymethylcytosine (5hmC)-binding activity. Methylates MAP3K5/ASK1 at 'Arg-85' and 'Arg-87' which promotes association of MAP3K5 with thioredoxin and negatively regulates MAP3K5 association with TRAF2, inhibiting MAP3K5 stimulation and MAP3K5-induced activation of JNK. Methylates H4R3 in genes involved in glioblastomagenesis in a CHTOP- and/or TET1-dependent manner. Plays a role in regulating alternative splicing in the heart. Methylates NPRL2 at 'Arg-78' leading to inhibition of its GTPase activator activity and then the GATOR1 complex and consequently inducing timely mTORC1 activation under methionine-sufficient conditions. This is Protein arginine N-methyltransferase 1 from Rattus norvegicus (Rat).